A 605-amino-acid chain; its full sequence is FAD-linked oxidoreductase easE (605 aa).

Residues 1–20 form the signal peptide; sequence MRHFVTFVVGFLLSWGFLSS. N-linked (GlcNAc...) asparagine glycosylation is found at Asn-46 and Asn-105. Positions 122-307 constitute an FAD-binding PCMH-type domain; the sequence is CHQGRLPLYS…TQATVRAFPD (186 aa). N-linked (GlcNAc...) asparagine glycosylation is present at Asn-370.

It belongs to the oxygen-dependent FAD-linked oxidoreductase family. FAD serves as cofactor.

It participates in alkaloid biosynthesis; ergot alkaloid biosynthesis. FAD-linked oxidoreductase; part of the gene cluster that mediates the biosynthesis of fungal ergot alkaloid ergovaline, the predominant ergopeptine product in E.festucae var. lolii. DmaW catalyzes the first step of ergot alkaloid biosynthesis by condensing dimethylallyl diphosphate (DMAP) and tryptophan to form 4-dimethylallyl-L-tryptophan. The second step is catalyzed by the methyltransferase easF that methylates 4-dimethylallyl-L-tryptophan in the presence of S-adenosyl-L-methionine, resulting in the formation of 4-dimethylallyl-L-abrine. The catalase easC and the FAD-dependent oxidoreductase easE then transform 4-dimethylallyl-L-abrine to chanoclavine-I which is further oxidized by easD in the presence of NAD(+), resulting in the formation of chanoclavine-I aldehyde. Agroclavine dehydrogenase easG then mediates the conversion of chanoclavine-I aldehyde to agroclavine via a non-enzymatic adduct reaction: the substrate is an iminium intermediate that is formed spontaneously from chanoclavine-I aldehyde in the presence of glutathione. The presence of easA is not required to complete this reaction. Further conversion of agroclavine to paspalic acid is a two-step process involving oxidation of agroclavine to elymoclavine and of elymoclavine to paspalic acid, the second step being performed by the elymoclavine oxidase cloA. Paspalic acid is then further converted to D-lysergic acid. Ergovaline is assembled from D-lysergic acid and three different amino acids by the D-lysergyl-peptide-synthetase composed of a monomudular (lpsB) and a trimodular (lpsA) nonribosomal peptide synthetase subunit. In Epichloe festucae var. lolii (Neotyphodium lolii), this protein is FAD-linked oxidoreductase easE.